The sequence spans 344 residues: Arginase 2, chloroplastic/mitochondrial (344 aa).

Residues 1–26 (MWKIGQRGVPYFQRLIAAPFTTLRSL) constitute a chloroplast and mitochondrion transit peptide. Positions 163, 187, 189, and 191 each coordinate Mn(2+). Residues 189 to 193 (HPDIY), 197 to 199 (EGN), and Asn-228 each bind substrate. Mn(2+)-binding residues include Asp-272 and Asp-274. Position 315 (Glu-315) interacts with substrate.

This sequence belongs to the arginase family. The cofactor is Mn(2+). As to expression, expressed in vasculature of roots, root tips, leaves and cotyledons.

It localises to the mitochondrion. It is found in the plastid. The protein localises to the chloroplast. It catalyses the reaction L-arginine + H2O = urea + L-ornithine. It carries out the reaction agmatine + H2O = urea + putrescine. It participates in nitrogen metabolism; urea cycle; L-ornithine and urea from L-arginine: step 1/1. Its pathway is amine and polyamine biosynthesis; putrescine biosynthesis via agmatine pathway; putrescine from agmatine: step 1/1. Its function is as follows. Catalyzes the hydrolysis of L-arginine to urea and L-ornithine. The latter can be utilized in the urea cycle or as a precursor for the synthesis of both polyamines and proline. Possesses agmatinase activity. Catalyzes the formation of putrescine from agmatine. The sequence is that of Arginase 2, chloroplastic/mitochondrial (ARGAH2) from Arabidopsis thaliana (Mouse-ear cress).